Consider the following 375-residue polypeptide: Acyl-coenzyme A diphosphatase NUDT19 (375 aa).

The Nudix hydrolase domain occupies 15 to 263; that stretch reads AASIVLAAGW…IWLPPPQFYE (249 aa). The tract at residues 91–116 is disordered; it reads LGPAPFSRTAFPSLPDTDDHKTDNTG. Positions 116 to 137 match the Nudix box motif; it reads GTLPEDVAFRICAVREAFEEAG. Residues Glu131 and Glu135 each coordinate Mg(2+). The Microbody targeting signal signature appears at 373–375; sequence SHL.

It belongs to the Nudix hydrolase family. In terms of assembly, monomer. Mg(2+) is required as a cofactor. It depends on Mn(2+) as a cofactor.

Its subcellular location is the peroxisome. The enzyme catalyses an acyl-CoA + H2O = an acyl-4'-phosphopantetheine + adenosine 3',5'-bisphosphate + 2 H(+). The catalysed reaction is CoA + H2O = (R)-4'-phosphopantetheine + adenosine 3',5'-bisphosphate + 2 H(+). It carries out the reaction hexanoyl-CoA + H2O = hexanoyl-4'-phosphopantetheine + adenosine 3',5'-bisphosphate + 2 H(+). It catalyses the reaction octanoyl-CoA + H2O = S-octanoyl-4'-phosphopantetheine + adenosine 3',5'-bisphosphate + 2 H(+). The enzyme catalyses butanoyl-CoA + H2O = S-butanoyl-4'-phosphopantetheine + adenosine 3',5'-bisphosphate + 2 H(+). The catalysed reaction is propanoyl-CoA + H2O = propanoyl-4'-phosphopantetheine + adenosine 3',5'-bisphosphate + 2 H(+). It carries out the reaction malonyl-CoA + H2O = malonyl-4'-phosphopantetheine + adenosine 3',5'-bisphosphate + 2 H(+). It catalyses the reaction succinyl-CoA + H2O = succinyl-4'-phosphopantetheine + adenosine 3',5'-bisphosphate + 2 H(+). The enzyme catalyses choloyl-CoA + H2O = S-choloyl-4'-phosphopantetheine + adenosine 3',5'-bisphosphate + 2 H(+). The catalysed reaction is 4,8-dimethylnonanoyl-CoA + H2O = S-(4,8-dimethylnonanoyl)-4'-phosphopantetheine + adenosine 3',5'-bisphosphate + 2 H(+). It carries out the reaction (9Z,12Z,15Z)-octadecatrienoyl-CoA + H2O = S-(9Z,12Z,15Z-octadecatrienoyl)-4'-phosphopantetheine + adenosine 3',5'-bisphosphate + 2 H(+). It catalyses the reaction (9Z,12Z)-octadecadienoyl-CoA + H2O = S-(9Z,12Z-octadecadienoyl)-4'-phosphopantetheine + adenosine 3',5'-bisphosphate + 2 H(+). The enzyme catalyses (9Z)-hexadecenoyl-CoA + H2O = S-(9Z-hexadecenoyl)-4'-phosphopantetheine + adenosine 3',5'-bisphosphate + 2 H(+). The catalysed reaction is (9Z)-tetradecenoyl-CoA + H2O = S-(9Z-tetradecenoyl)-4'-phosphopantetheine + adenosine 3',5'-bisphosphate + 2 H(+). It carries out the reaction (6Z)-octenoyl-CoA + H2O = S-(6Z-octenoyl)-4'-phosphopantetheine + adenosine 3',5'-bisphosphate + 2 H(+). It catalyses the reaction hexadecanoyl-CoA + H2O = S-hexadecanoyl-4'-phosphopantetheine + adenosine 3',5'-bisphosphate + 2 H(+). The enzyme catalyses tetradecanoyl-CoA + H2O = tetradecanoyl-4'-phosphopantetheine + adenosine 3',5'-bisphosphate + 2 H(+). The catalysed reaction is dodecanoyl-CoA + H2O = S-dodecanoyl-4'-phosphopantetheine + adenosine 3',5'-bisphosphate + 2 H(+). It carries out the reaction a 5'-end CoA-ribonucleoside in mRNA + H2O = a 5'-end phospho-adenosine-phospho-ribonucleoside in mRNA + (R)-4'-phosphopantetheine + 2 H(+). Fatty acyl-coenzyme A (CoA) diphosphatase that hydrolyzes fatty acyl-CoA to yield acyl-4'-phosphopantetheine and adenosine 3',5'-bisphosphate. Mediates the hydrolysis of a wide range of CoA esters, including choloyl-CoA and branched-chain fatty-acyl-CoA esters and at low substrate concentrations medium and long-chain fatty-acyl-CoA esters are the primary substrates. Highest activity seen with medium-chain acyl-CoA esters and higher rates of activity seen with the unsaturated acyl-CoA esters compared with the saturated esters. Exhibits decapping activity towards dpCoA-capped RNAs in vitro. This chain is Acyl-coenzyme A diphosphatase NUDT19 (NUDT19), found in Homo sapiens (Human).